We begin with the raw amino-acid sequence, 572 residues long: Flagellin A (572 aa).

Belongs to the bacterial flagellin family. In terms of assembly, heteromer of FlaA and FlaB. Interacts with FliW.

It is found in the secreted. Its subcellular location is the bacterial flagellum. Its function is as follows. Flagellin is the subunit protein which polymerizes to form the filaments of bacterial flagella. FlaA binds to flagellar assembly factor FliW protein, preventing FliW from binding to CsrA, so that CsrA can then bind flaA mRNA and represses its translation. This is Flagellin A (flaA) from Campylobacter jejuni subsp. jejuni serotype O:2 (strain ATCC 700819 / NCTC 11168).